The chain runs to 167 residues: Piercer of microtubule wall 1 protein (167 aa).

Residues 1 to 54 (MSEEKPQQSAEEPEPGEPKAKPAPEEPEPGEPKAKPAPEEPEPGEPKAKPAPEK) form a disordered region. A compositionally biased stretch (basic and acidic residues) spans 16-54 (GEPKAKPAPEEPEPGEPKAKPAPEEPEPGEPKAKPAPEK).

Belongs to the PIERCE1 family. In terms of assembly, microtubule inner protein component of sperm flagellar doublet microtubules. Interacts with CFAP53, ODAD1 and ODAD3; the interactions link the outer dynein arms docking complex (ODA-DC) to the internal microtubule inner proteins (MIP) in cilium axoneme. In terms of tissue distribution, expressed in brain, lung, kidney and testis.

It localises to the cytoplasm. The protein localises to the cytoskeleton. The protein resides in the cilium axoneme. It is found in the flagellum axoneme. Microtubule inner protein involved in the attachment of outer dynein arms (ODAs) to dynein-decorated doublet microtubules (DMTs) in cilia axoneme. Functions at the initial step of left-right asymmetry specification of the visceral organs. The polypeptide is Piercer of microtubule wall 1 protein (Mus musculus (Mouse)).